The primary structure comprises 399 residues: Succinate--CoA ligase [ADP-forming] subunit beta (399 aa).

In terms of domain architecture, ATP-grasp spans 9–254 (KAVLQPFGVS…ETEEDAKEIE (246 aa)). Residues Lys-46, 53–55 (GRG), Glu-109, Ser-112, and Glu-117 each bind ATP. 2 residues coordinate Mg(2+): Asn-209 and Asp-223. Substrate-binding positions include Asn-274 and 331-333 (GIM).

It belongs to the succinate/malate CoA ligase beta subunit family. Heterotetramer of two alpha and two beta subunits. It depends on Mg(2+) as a cofactor.

It carries out the reaction succinate + ATP + CoA = succinyl-CoA + ADP + phosphate. The enzyme catalyses GTP + succinate + CoA = succinyl-CoA + GDP + phosphate. The protein operates within carbohydrate metabolism; tricarboxylic acid cycle; succinate from succinyl-CoA (ligase route): step 1/1. Functionally, succinyl-CoA synthetase functions in the citric acid cycle (TCA), coupling the hydrolysis of succinyl-CoA to the synthesis of either ATP or GTP and thus represents the only step of substrate-level phosphorylation in the TCA. The beta subunit provides nucleotide specificity of the enzyme and binds the substrate succinate, while the binding sites for coenzyme A and phosphate are found in the alpha subunit. In Rhodopseudomonas palustris (strain BisB18), this protein is Succinate--CoA ligase [ADP-forming] subunit beta.